The sequence spans 125 residues: Large ribosomal subunit protein bL21 (125 aa).

Belongs to the bacterial ribosomal protein bL21 family. As to quaternary structure, part of the 50S ribosomal subunit. Contacts protein L20.

In terms of biological role, this protein binds to 23S rRNA in the presence of protein L20. The sequence is that of Large ribosomal subunit protein bL21 from Synechococcus sp. (strain CC9902).